Here is a 336-residue protein sequence, read N- to C-terminus: Inositol 2-dehydrogenase (336 aa).

The protein belongs to the Gfo/Idh/MocA family. Homotetramer.

It catalyses the reaction myo-inositol + NAD(+) = scyllo-inosose + NADH + H(+). In terms of biological role, involved in the oxidation of myo-inositol (MI) to 2-keto-myo-inositol (2KMI or 2-inosose). The polypeptide is Inositol 2-dehydrogenase (Pseudomonas savastanoi pv. phaseolicola (strain 1448A / Race 6) (Pseudomonas syringae pv. phaseolicola (strain 1448A / Race 6))).